Reading from the N-terminus, the 156-residue chain is Cyanate hydratase (156 aa).

Residues Arg96, Glu99, and Ser122 contribute to the active site.

This sequence belongs to the cyanase family.

The enzyme catalyses cyanate + hydrogencarbonate + 3 H(+) = NH4(+) + 2 CO2. Catalyzes the reaction of cyanate with bicarbonate to produce ammonia and carbon dioxide. The protein is Cyanate hydratase of Photorhabdus laumondii subsp. laumondii (strain DSM 15139 / CIP 105565 / TT01) (Photorhabdus luminescens subsp. laumondii).